We begin with the raw amino-acid sequence, 447 residues long: N-succinylarginine dihydrolase (447 aa).

Substrate contacts are provided by residues 19–28 (AGLSFGNEAS), N110, and 137–138 (HR). The active site involves E174. R212 lines the substrate pocket. H248 is an active-site residue. Positions 250 and 359 each coordinate substrate. The Nucleophile role is filled by C365.

The protein belongs to the succinylarginine dihydrolase family. As to quaternary structure, homodimer.

It carries out the reaction N(2)-succinyl-L-arginine + 2 H2O + 2 H(+) = N(2)-succinyl-L-ornithine + 2 NH4(+) + CO2. It participates in amino-acid degradation; L-arginine degradation via AST pathway; L-glutamate and succinate from L-arginine: step 2/5. Catalyzes the hydrolysis of N(2)-succinylarginine into N(2)-succinylornithine, ammonia and CO(2). The protein is N-succinylarginine dihydrolase of Escherichia coli (strain ATCC 8739 / DSM 1576 / NBRC 3972 / NCIMB 8545 / WDCM 00012 / Crooks).